A 176-amino-acid polypeptide reads, in one-letter code: Dual-action ribosomal maturation protein DarP (176 aa).

Belongs to the DarP family.

The protein resides in the cytoplasm. In terms of biological role, member of a network of 50S ribosomal subunit biogenesis factors which assembles along the 30S-50S interface, preventing incorrect 23S rRNA structures from forming. Promotes peptidyl transferase center (PTC) maturation. This Haemophilus ducreyi (strain 35000HP / ATCC 700724) protein is Dual-action ribosomal maturation protein DarP.